Reading from the N-terminus, the 623-residue chain is Isocitrate dehydrogenase kinase/phosphatase (623 aa).

ATP-binding positions include 344-350 (APGIKGM) and Lys365. Asp400 is an active-site residue.

This sequence belongs to the AceK family.

The protein resides in the cytoplasm. It carries out the reaction L-seryl-[isocitrate dehydrogenase] + ATP = O-phospho-L-seryl-[isocitrate dehydrogenase] + ADP + H(+). Bifunctional enzyme which can phosphorylate or dephosphorylate isocitrate dehydrogenase (IDH) on a specific serine residue. This is a regulatory mechanism which enables bacteria to bypass the Krebs cycle via the glyoxylate shunt in response to the source of carbon. When bacteria are grown on glucose, IDH is fully active and unphosphorylated, but when grown on acetate or ethanol, the activity of IDH declines drastically concomitant with its phosphorylation. This Polaromonas naphthalenivorans (strain CJ2) protein is Isocitrate dehydrogenase kinase/phosphatase.